Reading from the N-terminus, the 325-residue chain is Dimethylallyltranstransferase (325 aa).

The isopentenyl diphosphate site is built by Arg-54 and His-84. Positions 91 and 95 each coordinate Mg(2+). Residues 91-95 carry the DDXXD motif motif; it reads DRVVD. Position 101 (Arg-101) interacts with isopentenyl diphosphate. A DDXXD motif motif is present at residues 217–221; sequence RDIIA.

Belongs to the FPP/GGPP synthase family. It depends on Mg(2+) as a cofactor.

The enzyme catalyses isopentenyl diphosphate + dimethylallyl diphosphate = (2E)-geranyl diphosphate + diphosphate. It participates in isoprenoid biosynthesis; geranyl diphosphate biosynthesis; geranyl diphosphate from dimethylallyl diphosphate and isopentenyl diphosphate: step 1/1. In terms of biological role, catalyzes the addition of isopentenyl diphosphate (IPP) onto dimethylallyl diphosphate (DMAPP) to form geranyl pyrophosphate (GPP). Is probably involved in the biosynthesis of decaprenyl diphosphate, which is required for mycobacterial cell wall synthesis. Could be required for host endothelial-cell invasion and/or intracellular survival. This Mycobacterium tuberculosis (strain ATCC 25618 / H37Rv) protein is Dimethylallyltranstransferase.